The chain runs to 313 residues: Putative adhesin P1-like protein MPN_202 (313 aa).

The segment covering 1 to 16 has biased composition (low complexity); it reads MGSQNQGSTTTTSAGN. A disordered region spans residues 1–44; the sequence is MGSQNQGSTTTTSAGNPDSLVTDKVDQKGQVQTSGQNLSDTNYT. Polar residues predominate over residues 29–44; it reads GQVQTSGQNLSDTNYT.

The protein belongs to the adhesin P1 family.

This chain is Putative adhesin P1-like protein MPN_202, found in Mycoplasma pneumoniae (strain ATCC 29342 / M129 / Subtype 1) (Mycoplasmoides pneumoniae).